Consider the following 73-residue polypeptide: Frenatin 3.1 (73 aa).

The N-terminal stretch at 1 to 22 (MHFLKKSIFLVLFLGLVSLSIC) is a signal peptide. A propeptide spanning residues 23 to 46 (EKEKREDQNEEEVDENEEASEEKR) is cleaved from the precursor. Positions 25–45 (EKREDQNEEEVDENEEASEEK) are disordered. Positions 30 to 42 (QNEEEVDENEEAS) are enriched in acidic residues.

In terms of tissue distribution, expressed by the skin glands.

It localises to the secreted. Antimicrobial peptide with activity against both Gram-positive and Gram-negative bacteria. This Nyctimystes infrafrenatus (White-lipped tree frog) protein is Frenatin 3.1.